Reading from the N-terminus, the 46-residue chain is NALFILGNIGNNDVNYAFPDRAIEEIRFYVPFITEAVANATREIIR.

The N-linked (GlcNAc...) asparagine glycan is linked to asparagine 39.

Belongs to the 'GDSL' lipolytic enzyme family.

It carries out the reaction 17-O-acetylajmaline + H2O = ajmaline + acetate + H(+). The enzyme catalyses 17-O-acetylnorajmaline + H2O = norajmaline + acetate + H(+). Deacetylates 17-O-acetylajmaline and 17-O-acetylnorajmaline, but is inactive toward other acetylated alkaloids. The polypeptide is Acetylajmalan esterase (Rauvolfia verticillata (Common devil-pepper)).